The following is a 251-amino-acid chain: Cyclohexanol dehydrogenase (251 aa).

Residues Asp-42, Asn-95, Tyr-161, Lys-165, Ile-194, and Thr-196 each coordinate NAD(+). Catalysis depends on Tyr-161, which acts as the Proton acceptor.

This sequence belongs to the short-chain dehydrogenases/reductases (SDR) family.

The catalysed reaction is cyclohexanol + NAD(+) = cyclohexanone + NADH + H(+). In terms of biological role, catalyzes the oxidation of cyclohexanol to cyclohexanone. Required for the conversion of cyclohexanol to adipic acid. This chain is Cyclohexanol dehydrogenase, found in Acinetobacter sp. (strain SE19).